The primary structure comprises 460 residues: Probable fibrosin-1 (460 aa).

A Glycyl lysine isopeptide (Lys-Gly) (interchain with G-Cter in SUMO2) cross-link involves residue lysine 8. Disordered stretches follow at residues 40–79 (SLQGAFQPKSTNPELPPRLGPVPSGLSQKGTQIPDHFRPP), 205–311 (FAQK…KEEA), and 406–460 (YSRL…RADR). The segment covering 212–223 (GAPPAFASPPDP) has biased composition (pro residues). Residues arginine 229 and arginine 239 each carry the asymmetric dimethylarginine modification. Positions 248 to 272 (GSDKERPVERREPSITKEEKDRDLP) are enriched in basic and acidic residues. Residue serine 281 is modified to Phosphoserine. Over residues 288–311 (RAGEEGPRPTKESVRVKEERKEEA) the composition is skewed to basic and acidic residues. Residues 436-453 (APPPLVPAPRPSSPPRGP) are compositionally biased toward pro residues.

The protein is Probable fibrosin-1 (FBRS) of Homo sapiens (Human).